The chain runs to 540 residues: Chaperonin GroEL (540 aa).

ATP contacts are provided by residues 29-32 (TLGP), 86-90 (DGTTT), Gly413, and Asp493. Residues 520 to 540 (AEKPEPKPAPGPADPGAGMDF) are disordered.

It belongs to the chaperonin (HSP60) family. In terms of assembly, forms a cylinder of 14 subunits composed of two heptameric rings stacked back-to-back. Interacts with the co-chaperonin GroES.

It is found in the cytoplasm. The enzyme catalyses ATP + H2O + a folded polypeptide = ADP + phosphate + an unfolded polypeptide.. Together with its co-chaperonin GroES, plays an essential role in assisting protein folding. The GroEL-GroES system forms a nano-cage that allows encapsulation of the non-native substrate proteins and provides a physical environment optimized to promote and accelerate protein folding. The chain is Chaperonin GroEL from Tropheryma whipplei (Whipple's bacillus).